Consider the following 456-residue polypeptide: MNVPRETIAAIATAQGRGGVGIIRVSGPLAGKAAEAIIGRTLKPRFAHYGPFVDGTGQVLDEGIALYFPGPNSFTGEDVLELQGHGGPIVLDMLLQRCLQLGSRLARPGEFSERAFLNDKLDLAQAEAIADLIEASSAQAARNALRSLQGAFSRRVDNLTEKLISLRIYVEAAIDFPEEEIDFLADGHVLNMLDDVRAELSTVLREAGQGALLRDGMTVVIAGRPNAGKSSLLNALAGREAAIVTEIAGTTRDVLREHIHIDGMPLHVVDTAGLRDTQDQVEMIGVQRALKAIGEADRILLVVDATAPEAADPFALWPEFLEQRPDPSKVTLIRNKADLSGDPINLQTSVDGHVTISLSARSGGEGLELLREHLKACMGYEQTSESSFSARRRHLEALRHASDSLEHGRAQLTLAGAGELLAEDLRQAQQALGEITGAFSSDDLLGRIFSSFCIGK.

Positions 24, 81, and 120 each coordinate (6S)-5-formyl-5,6,7,8-tetrahydrofolate. One can recognise a TrmE-type G domain in the interval 216–379 (GMTVVIAGRP…LREHLKACMG (164 aa)). Asn-226 contributes to the K(+) binding site. Residues 226-231 (NAGKSS), 245-251 (TEIAGTT), 270-273 (DTAG), 335-338 (NKAD), and 359-361 (SAR) each bind GTP. Ser-230 serves as a coordination point for Mg(2+). 3 residues coordinate K(+): Thr-245, Ile-247, and Thr-250. Thr-251 is a Mg(2+) binding site. Lys-456 serves as a coordination point for (6S)-5-formyl-5,6,7,8-tetrahydrofolate.

This sequence belongs to the TRAFAC class TrmE-Era-EngA-EngB-Septin-like GTPase superfamily. TrmE GTPase family. In terms of assembly, homodimer. Heterotetramer of two MnmE and two MnmG subunits. Requires K(+) as cofactor.

The protein resides in the cytoplasm. Exhibits a very high intrinsic GTPase hydrolysis rate. Involved in the addition of a carboxymethylaminomethyl (cmnm) group at the wobble position (U34) of certain tRNAs, forming tRNA-cmnm(5)s(2)U34. This is tRNA modification GTPase MnmE from Pseudomonas syringae pv. syringae (strain B728a).